A 66-amino-acid chain; its full sequence is uncharacterized protein (66 aa).

The tract at residues 1–21 is disordered; that stretch reads MPGGDRTGPWGQGPRTGRRAG.

This is an uncharacterized protein from Archaeoglobus fulgidus (strain ATCC 49558 / DSM 4304 / JCM 9628 / NBRC 100126 / VC-16).